Here is a 638-residue protein sequence, read N- to C-terminus: Asparagine--tRNA ligase, cytoplasmic 2 (638 aa).

Residues 1–16 (MESHGKTHQKEHDNDL) are compositionally biased toward basic and acidic residues. 2 disordered regions span residues 1–23 (MESHGKTHQKEHDNDLSPKPITL) and 62–87 (VKKNSPPPPLPVVAAPSPSSGGDQAH).

This sequence belongs to the class-II aminoacyl-tRNA synthetase family.

The protein localises to the cytoplasm. It localises to the cytosol. The catalysed reaction is tRNA(Asn) + L-asparagine + ATP = L-asparaginyl-tRNA(Asn) + AMP + diphosphate + H(+). In Arabidopsis thaliana (Mouse-ear cress), this protein is Asparagine--tRNA ligase, cytoplasmic 2.